The sequence spans 67 residues: UPF0337 protein Atu4724 (67 aa).

Belongs to the UPF0337 (CsbD) family.

The sequence is that of UPF0337 protein Atu4724 from Agrobacterium fabrum (strain C58 / ATCC 33970) (Agrobacterium tumefaciens (strain C58)).